The chain runs to 356 residues: S-adenosylmethionine:tRNA ribosyltransferase-isomerase (356 aa).

The protein belongs to the QueA family. As to quaternary structure, monomer.

It localises to the cytoplasm. It catalyses the reaction 7-aminomethyl-7-carbaguanosine(34) in tRNA + S-adenosyl-L-methionine = epoxyqueuosine(34) in tRNA + adenine + L-methionine + 2 H(+). It functions in the pathway tRNA modification; tRNA-queuosine biosynthesis. Transfers and isomerizes the ribose moiety from AdoMet to the 7-aminomethyl group of 7-deazaguanine (preQ1-tRNA) to give epoxyqueuosine (oQ-tRNA). In Escherichia coli (strain ATCC 8739 / DSM 1576 / NBRC 3972 / NCIMB 8545 / WDCM 00012 / Crooks), this protein is S-adenosylmethionine:tRNA ribosyltransferase-isomerase.